Here is a 318-residue protein sequence, read N- to C-terminus: Mitochondrial thiamine pyrophosphate carrier (318 aa).

3 Solcar repeats span residues 13 to 106 (NSKL…LTEL), 116 to 202 (HQFS…LKRA), and 214 to 309 (TGNL…FCNL). Helical transmembrane passes span 19 to 39 (AVAG…LDVI), 87 to 107 (ILSI…TELL), 122 to 142 (FVCG…VDVL), 173 to 193 (VFYK…GLQF), 220 to 240 (LLCG…LDLF), and 293 to 313 (ALST…FHCI).

It belongs to the mitochondrial carrier (TC 2.A.29) family.

The protein resides in the mitochondrion membrane. It carries out the reaction thiamine phosphate(out) + thiamine diphosphate(in) = thiamine phosphate(in) + thiamine diphosphate(out). Mitochondrial transporter mediating uptake of thiamine diphosphate into mitochondria. It is not clear if the antiporter activity is affected by the membrane potential or by the proton electrochemical gradient. This is Mitochondrial thiamine pyrophosphate carrier (Slc25a19) from Rattus norvegicus (Rat).